The following is a 264-amino-acid chain: Myozenin-2 (264 aa).

Arg53 carries the omega-N-methylarginine modification. Positions Glu98–Ile134 are disordered. Ser101 bears the Phosphoserine mark. A compositionally biased stretch (pro residues) spans Phe106–Pro120. Phosphothreonine occurs at positions 107 and 111. Residue Ser116 is modified to Phosphoserine.

Belongs to the myozenin family. As to quaternary structure, interacts via its C-terminus with spectrin repeats 3 and 4 of ACTN2. Interacts with ACTN1, LDB3, MYOT and PPP3CA.

The protein localises to the cytoplasm. It localises to the myofibril. It is found in the sarcomere. The protein resides in the z line. Myozenins may serve as intracellular binding proteins involved in linking Z line proteins such as alpha-actinin, gamma-filamin, TCAP/telethonin, LDB3/ZASP and localizing calcineurin signaling to the sarcomere. Plays an important role in the modulation of calcineurin signaling. May play a role in myofibrillogenesis. In Bos taurus (Bovine), this protein is Myozenin-2 (MYOZ2).